The primary structure comprises 598 residues: Beta-myrcene/(E)-beta-ocimene synthase 2, chloroplastic (598 aa).

A chloroplast-targeting transit peptide spans M1–S30. R307, D344, D348, R486, and N489 together coordinate (2E)-geranyl diphosphate. Mg(2+) is bound by residues D344 and D348. The short motif at D344–D348 is the DDXXD motif element. Mg(2+)-binding residues include N489, T493, and E497.

It belongs to the terpene synthase family. Tpsb subfamily. The cofactor is Mg(2+). It depends on Mn(2+) as a cofactor. Expressed exclusively in mature flowers, but not in inmmature buds.

It is found in the plastid. Its subcellular location is the chloroplast. It carries out the reaction (2E)-geranyl diphosphate = beta-myrcene + diphosphate. The protein operates within secondary metabolite biosynthesis; terpenoid biosynthesis. Its function is as follows. Involved in monoterpene (C10) biosynthesis. The major products are alpha- and beta-pinene, sabinene, beta-myrcene, (E)-beta-ocimene and limonene. The sequence is that of Beta-myrcene/(E)-beta-ocimene synthase 2, chloroplastic (TPS24) from Arabidopsis thaliana (Mouse-ear cress).